A 249-amino-acid polypeptide reads, in one-letter code: DNA polymerase sliding clamp (249 aa).

The protein belongs to the PCNA family. In terms of assembly, homotrimer. The subunits circularize to form a toroid; DNA passes through its center. Replication factor C (RFC) is required to load the toroid on the DNA.

In terms of biological role, sliding clamp subunit that acts as a moving platform for DNA processing. Responsible for tethering the catalytic subunit of DNA polymerase and other proteins to DNA during high-speed replication. The polypeptide is DNA polymerase sliding clamp (Pyrococcus horikoshii (strain ATCC 700860 / DSM 12428 / JCM 9974 / NBRC 100139 / OT-3)).